A 305-amino-acid polypeptide reads, in one-letter code: tRNA pseudouridine synthase B (305 aa).

Aspartate 39 (nucleophile) is an active-site residue.

Belongs to the pseudouridine synthase TruB family. Type 1 subfamily.

The enzyme catalyses uridine(55) in tRNA = pseudouridine(55) in tRNA. In terms of biological role, responsible for synthesis of pseudouridine from uracil-55 in the psi GC loop of transfer RNAs. This Staphylococcus aureus (strain Mu50 / ATCC 700699) protein is tRNA pseudouridine synthase B.